A 115-amino-acid polypeptide reads, in one-letter code: U3-lycotoxin-Ls1a (115 aa).

Positions 1-20 (MKFVLLFGVFLVTLFSYSSA) are cleaved as a signal peptide. Positions 21 to 44 (EMLDDFDQAAEDELLSLIEKEEAR) are excised as a propeptide. Intrachain disulfides connect C48/C63, C55/C72, C62/C87, and C74/C85.

It belongs to the neurotoxin 19 (CSTX) family. 01 subfamily. Expressed by the venom gland.

It is found in the secreted. This chain is U3-lycotoxin-Ls1a, found in Lycosa singoriensis (Wolf spider).